Consider the following 317-residue polypeptide: Homoserine O-acetyltransferase (317 aa).

Cys-142 serves as the catalytic Acyl-thioester intermediate. 2 residues coordinate substrate: Lys-163 and Ser-192. The active-site Proton acceptor is the His-235. Glu-237 is a catalytic residue. Arg-249 serves as a coordination point for substrate.

Belongs to the MetA family.

It localises to the cytoplasm. The catalysed reaction is L-homoserine + acetyl-CoA = O-acetyl-L-homoserine + CoA. Its pathway is amino-acid biosynthesis; L-methionine biosynthesis via de novo pathway; O-acetyl-L-homoserine from L-homoserine: step 1/1. Its function is as follows. Transfers an acetyl group from acetyl-CoA to L-homoserine, forming acetyl-L-homoserine. The protein is Homoserine O-acetyltransferase of Rhizorhabdus wittichii (strain DSM 6014 / CCUG 31198 / JCM 15750 / NBRC 105917 / EY 4224 / RW1) (Sphingomonas wittichii).